We begin with the raw amino-acid sequence, 1436 residues long: Probable ATP-dependent RNA helicase spindle-E (1436 aa).

The 168-residue stretch at 124–291 folds into the Helicase ATP-binding domain; it reads LAAINANPVV…FTTTNSIPPV (168 aa). 137–144 is a binding site for ATP; that stretch reads GETGCGKT. A DEAH box motif is present at residues 237–240; the sequence is DEVH. Positions 337-524 constitute a Helicase C-terminal domain; that stretch reads KIIMVIDNME…NSVLRAKELE (188 aa). The 64-residue stretch at 940–1003 folds into the Tudor domain; the sequence is ACDISKGMMV…RFMSEELIQQ (64 aa).

Belongs to the DEAD box helicase family. DEAH subfamily.

The protein localises to the cytoplasm. The catalysed reaction is ATP + H2O = ADP + phosphate + H(+). Its function is as follows. Probable ATP-binding RNA helicase which plays a central role during spermatogenesis and oogenesis by repressing transposable elements and preventing their mobilization, which is essential for the germline integrity. Acts via the piRNA metabolic process, which mediates the repression of transposable elements during meiosis by forming complexes composed of piRNAs and Piwi and govern the methylation and subsequent repression of transposons. Involved in the repression of LTR retrotransposon copia. Also involved in telomere regulation by repressing specialized telomeric retroelements HeT-A, TAHRE, and TART; Drosophila telomeres being maintained by transposition of specialized telomeric retroelements. Involved in telomeric trans-silencing, a repression mechanism by which a transposon or a transgene inserted in subtelomeric heterochromatin has the capacity to repress in trans in the female germline, a homologous transposon, or transgene located in euchromatin. Involved in the repression of testis-expressed Stellate genes by the homologous Su(Ste) repeats. Required for anteroposterior and dorsoventral axis formation during oogenesis. The polypeptide is Probable ATP-dependent RNA helicase spindle-E (spn-E) (Drosophila yakuba (Fruit fly)).